The primary structure comprises 322 residues: MQNRNIFSWVKEQTTRSISVSIMILIYVITWTSISHAYPIFAQQSYENPREATGRIVCANCHLANKPVDIEVPQAVLPDTVFEAVVRIPYDMQLKQVLSNGKRGSLNVGAVLILPEGFELAPPDRISPEMKEKMGNLSFQNYRPTKKNILVIGPVPGQKYSEITFPILSPDPATKKDVYFLKYPIYVGGNRGRGQIYPDGSKSNNTVYNATAAGIVSKIVRKEKGGYELTIADASEGRQVVDIIPPGPELLVSEGESIKLDQPLTSNPNVGGFGQGDAEIVLQDPSRVQGLFFFFASVILAQIFLVLKKKQFEKVQLSEMNF.

Residues 1–35 (MQNRNIFSWVKEQTTRSISVSIMILIYVITWTSIS) form the signal peptide. 4 residues coordinate heme: Tyr38, Cys58, Cys61, and His62. A helical transmembrane segment spans residues 288–308 (VQGLFFFFASVILAQIFLVLK).

This sequence belongs to the cytochrome f family. In terms of assembly, the 4 large subunits of the cytochrome b6-f complex are cytochrome b6, subunit IV (17 kDa polypeptide, petD), cytochrome f and the Rieske protein, while the 4 small subunits are PetG, PetL, PetM and PetN. The complex functions as a dimer. Heme is required as a cofactor.

It is found in the plastid. Its subcellular location is the chloroplast thylakoid membrane. Its function is as follows. Component of the cytochrome b6-f complex, which mediates electron transfer between photosystem II (PSII) and photosystem I (PSI), cyclic electron flow around PSI, and state transitions. The sequence is that of Cytochrome f from Nandina domestica (Heavenly bamboo).